Reading from the N-terminus, the 450-residue chain is Interferon regulatory factor 4 (450 aa).

The IRF tryptophan pentad repeat DNA-binding region spans 21–129; the sequence is NGKLRQWLID…DPYKVYRIVP (109 aa). Phosphoserine; by ROCK2 occurs at positions 446 and 447.

It belongs to the IRF family. Interacts with SPIB and DEF6. Interacts with the BATF-JUNB heterodimer. Interacts with BATF (via bZIP domain); the interaction is direct. Directly interacts with NLRP3 in the nucleus of Th2 cells; this interaction enhances IRF4 ability to bind to the IL4 promoter and is required for optimal IRF4-dependent IL4 transcription. Interacts with SPI1. Post-translationally, phosphorylation by ROCK2 regulates IL-17 and IL-21 production. In terms of tissue distribution, lymphoid cells.

Its subcellular location is the nucleus. It localises to the cytoplasm. Transcriptional activator. Binds to the interferon-stimulated response element (ISRE) of the MHC class I promoter. Binds the immunoglobulin lambda light chain enhancer, together with PU.1. Probably plays a role in ISRE-targeted signal transduction mechanisms specific to lymphoid cells. Involved in CD8(+) dendritic cell differentiation by forming a complex with the BATF-JUNB heterodimer in immune cells, leading to recognition of AICE sequence (5'-TGAnTCA/GAAA-3'), an immune-specific regulatory element, followed by cooperative binding of BATF and IRF4 and activation of genes. This is Interferon regulatory factor 4 from Mus musculus (Mouse).